We begin with the raw amino-acid sequence, 204 residues long: Large ribosomal subunit protein eL15 (204 aa).

The protein belongs to the eukaryotic ribosomal protein eL15 family. In terms of assembly, component of the large ribosomal subunit.

It is found in the cytoplasm. Its function is as follows. Component of the large ribosomal subunit. The ribosome is a large ribonucleoprotein complex responsible for the synthesis of proteins in the cell. The chain is Large ribosomal subunit protein eL15 (rpl15) from Hypophthalmichthys molitrix (Silver carp).